A 130-amino-acid chain; its full sequence is Putative transposase for insertion sequence element IS6501 (130 aa).

This sequence belongs to the transposase 11 family.

In terms of biological role, involved in the transposition of the insertion sequence. This is Putative transposase for insertion sequence element IS6501 from Brucella ovis (strain ATCC 25840 / 63/290 / NCTC 10512).